A 568-amino-acid chain; its full sequence is 2-succinyl-5-enolpyruvyl-6-hydroxy-3-cyclohexene-1-carboxylate synthase (568 aa).

The protein belongs to the TPP enzyme family. MenD subfamily. Homodimer. Mg(2+) is required as a cofactor. Mn(2+) serves as cofactor. The cofactor is thiamine diphosphate.

The catalysed reaction is isochorismate + 2-oxoglutarate + H(+) = 5-enolpyruvoyl-6-hydroxy-2-succinyl-cyclohex-3-ene-1-carboxylate + CO2. It functions in the pathway quinol/quinone metabolism; 1,4-dihydroxy-2-naphthoate biosynthesis; 1,4-dihydroxy-2-naphthoate from chorismate: step 2/7. Its pathway is quinol/quinone metabolism; menaquinone biosynthesis. In terms of biological role, catalyzes the thiamine diphosphate-dependent decarboxylation of 2-oxoglutarate and the subsequent addition of the resulting succinic semialdehyde-thiamine pyrophosphate anion to isochorismate to yield 2-succinyl-5-enolpyruvyl-6-hydroxy-3-cyclohexene-1-carboxylate (SEPHCHC). This is 2-succinyl-5-enolpyruvyl-6-hydroxy-3-cyclohexene-1-carboxylate synthase from Histophilus somni (strain 2336) (Haemophilus somnus).